The chain runs to 162 residues: Peptidyl-prolyl cis-trans isomerase-like 1 (162 aa).

The 155-residue stretch at 1–155 (MTTNIVLETT…EEVKIVKARV (155 aa)) folds into the PPIase cyclophilin-type domain.

The protein belongs to the cyclophilin-type PPIase family. PPIL1 subfamily.

It catalyses the reaction [protein]-peptidylproline (omega=180) = [protein]-peptidylproline (omega=0). PPIases accelerate the folding of proteins. It catalyzes the cis-trans isomerization of proline imidic peptide bonds in oligopeptides. This is Peptidyl-prolyl cis-trans isomerase-like 1 (CYP1) from Gibberella zeae (strain ATCC MYA-4620 / CBS 123657 / FGSC 9075 / NRRL 31084 / PH-1) (Wheat head blight fungus).